The sequence spans 222 residues: MIF4G domain-containing protein (222 aa).

The MIF4G domain maps to 3 to 205; it reads EPSREEYKIQ…LEIIEFRAAG (203 aa).

This sequence belongs to the MIF4GD family. As to quaternary structure, interacts with EIF4G1, EIF4G2 and SLBP; probably tethered by SLBP to the 3'-end of mRNAs ending with the histone stem-loop, it also interacts with EIF4G1 which is bound to their 5'-end.

The protein localises to the cytoplasm. It localises to the nucleus. Functionally, functions in replication-dependent translation of histone mRNAs which differ from other eukaryotic mRNAs in that they do not end with a poly-A tail but a stem-loop. May participate in circularizing those mRNAs specifically enhancing their translation. In Homo sapiens (Human), this protein is MIF4G domain-containing protein (MIF4GD).